The chain runs to 282 residues: tRNA pseudouridine synthase A (282 aa).

Asp-61 functions as the Nucleophile in the catalytic mechanism. Tyr-119 contributes to the substrate binding site.

This sequence belongs to the tRNA pseudouridine synthase TruA family. As to quaternary structure, homodimer.

The catalysed reaction is uridine(38/39/40) in tRNA = pseudouridine(38/39/40) in tRNA. Functionally, formation of pseudouridine at positions 38, 39 and 40 in the anticodon stem and loop of transfer RNAs. The sequence is that of tRNA pseudouridine synthase A from Nostoc sp. (strain PCC 7120 / SAG 25.82 / UTEX 2576).